Reading from the N-terminus, the 753-residue chain is 5-methyltetrahydropteroyltriglutamate--homocysteine methyltransferase (753 aa).

Residues 17-20 (RELK) and lysine 117 contribute to the 5-methyltetrahydropteroyltri-L-glutamate site. L-homocysteine contacts are provided by residues 431 to 433 (IGS) and glutamate 484. Residues 431 to 433 (IGS) and glutamate 484 each bind L-methionine. Residues 515-516 (RC) and tryptophan 561 contribute to the 5-methyltetrahydropteroyltri-L-glutamate site. Aspartate 599 is a binding site for L-homocysteine. Residue aspartate 599 coordinates L-methionine. Glutamate 605 is a binding site for 5-methyltetrahydropteroyltri-L-glutamate. Zn(2+)-binding residues include histidine 641, cysteine 643, and glutamate 665. Histidine 694 functions as the Proton donor in the catalytic mechanism. A Zn(2+)-binding site is contributed by cysteine 726.

This sequence belongs to the vitamin-B12 independent methionine synthase family. The cofactor is Zn(2+).

The catalysed reaction is 5-methyltetrahydropteroyltri-L-glutamate + L-homocysteine = tetrahydropteroyltri-L-glutamate + L-methionine. It functions in the pathway amino-acid biosynthesis; L-methionine biosynthesis via de novo pathway; L-methionine from L-homocysteine (MetE route): step 1/1. In terms of biological role, catalyzes the transfer of a methyl group from 5-methyltetrahydrofolate to homocysteine resulting in methionine formation. In Escherichia coli O8 (strain IAI1), this protein is 5-methyltetrahydropteroyltriglutamate--homocysteine methyltransferase.